A 392-amino-acid polypeptide reads, in one-letter code: Esterase EstB (392 aa).

The active-site Acyl-ester intermediate is serine 75.

Belongs to the class-A beta-lactamase family.

The protein localises to the cytoplasm. Its activity is regulated as follows. Strongly inhibited by eserin, NaF, HgCl2, SDS and Triton X-100. Functionally, acts on short-chain (C4-C6) fatty acid esters and triglycerides, including tertiary alcohol esters. Activity on p-nitrophenyl esters is generally higher than on o-nitrophenyl esters. Lacks beta-lactamase activity; it hydrolyzes the ester bond of cephalosporin substrates but there is no opening of the beta-lactam ring observed. This is Esterase EstB (estB) from Burkholderia gladioli (Pseudomonas marginata).